A 338-amino-acid chain; its full sequence is NAD kinase (338 aa).

D66 acts as the Proton acceptor in catalysis. Residues 66–67, R71, 141–142, K152, D171, 182–187, and A206 each bind NAD(+); these read DG, ND, and TAYAFS. The segment at 317–338 is disordered; it reads GDAGVAGTEPDKPGERDGKAGA. Residues 325–338 are compositionally biased toward basic and acidic residues; that stretch reads EPDKPGERDGKAGA.

It belongs to the NAD kinase family. It depends on a divalent metal cation as a cofactor.

Its subcellular location is the cytoplasm. The enzyme catalyses NAD(+) + ATP = ADP + NADP(+) + H(+). Its function is as follows. Involved in the regulation of the intracellular balance of NAD and NADP, and is a key enzyme in the biosynthesis of NADP. Catalyzes specifically the phosphorylation on 2'-hydroxyl of the adenosine moiety of NAD to yield NADP. In Bifidobacterium longum subsp. infantis (strain ATCC 15697 / DSM 20088 / JCM 1222 / NCTC 11817 / S12), this protein is NAD kinase.